We begin with the raw amino-acid sequence, 402 residues long: Propionate kinase (402 aa).

2 residues coordinate ATP: asparagine 11 and lysine 18. Residue asparagine 11 participates in Mg(2+) binding. Residue arginine 86 coordinates substrate. The active-site Proton donor/acceptor is aspartate 143. Residues histidine 175, 203 to 207, 278 to 280, and 326 to 330 each bind ATP; these read HLGNG, DLR, and GIGEN.

This sequence belongs to the acetokinase family. TdcD subfamily. Homodimer. Requires Mg(2+) as cofactor.

It catalyses the reaction propanoate + ATP = propanoyl phosphate + ADP. Its pathway is amino-acid degradation; L-threonine degradation via propanoate pathway; propanoate from L-threonine: step 4/4. Its function is as follows. Catalyzes the conversion of propionyl phosphate and ADP to propionate and ATP. The protein is Propionate kinase of Edwardsiella piscicida.